A 129-amino-acid chain; its full sequence is Protein FYV12 (129 aa).

Asn-91 is a glycosylation site (N-linked (GlcNAc...) asparagine). Residues 109 to 128 form a helical membrane-spanning segment; sequence LMTTFLLYVLYVCIYISAFI.

It localises to the membrane. Functionally, involved in K1 killer toxin resistance. The sequence is that of Protein FYV12 (FYV12) from Saccharomyces cerevisiae (strain ATCC 204508 / S288c) (Baker's yeast).